We begin with the raw amino-acid sequence, 156 residues long: MNLNATLIGQLIAFALFVWFCMKFVWPPIINAIETRQSQIANALASAEAAKKEQADTKNLVEQELSAAKVQAQDILDAANKRRNEVLDEVKAEAEELKAKIIAQGYAEVEAERKRVQEELRLKVASLAVAGAEKIVGRSIDEAANNDIIDKLVAEL.

A helical transmembrane segment spans residues 11–31 (LIAFALFVWFCMKFVWPPIIN).

Belongs to the ATPase B chain family. F-type ATPases have 2 components, F(1) - the catalytic core - and F(0) - the membrane proton channel. F(1) has five subunits: alpha(3), beta(3), gamma(1), delta(1), epsilon(1). F(0) has three main subunits: a(1), b(2) and c(10-14). The alpha and beta chains form an alternating ring which encloses part of the gamma chain. F(1) is attached to F(0) by a central stalk formed by the gamma and epsilon chains, while a peripheral stalk is formed by the delta and b chains.

The protein resides in the cell inner membrane. F(1)F(0) ATP synthase produces ATP from ADP in the presence of a proton or sodium gradient. F-type ATPases consist of two structural domains, F(1) containing the extramembraneous catalytic core and F(0) containing the membrane proton channel, linked together by a central stalk and a peripheral stalk. During catalysis, ATP synthesis in the catalytic domain of F(1) is coupled via a rotary mechanism of the central stalk subunits to proton translocation. Its function is as follows. Component of the F(0) channel, it forms part of the peripheral stalk, linking F(1) to F(0). This chain is ATP synthase subunit b, found in Haemophilus influenzae (strain PittEE).